The sequence spans 368 residues: Flagellar P-ring protein (368 aa).

The signal sequence occupies residues 1–22 (MLIPLARAVLALALLGAGAAHA).

The protein belongs to the FlgI family. As to quaternary structure, the basal body constitutes a major portion of the flagellar organelle and consists of four rings (L,P,S, and M) mounted on a central rod.

The protein resides in the periplasm. The protein localises to the bacterial flagellum basal body. Functionally, assembles around the rod to form the L-ring and probably protects the motor/basal body from shearing forces during rotation. This chain is Flagellar P-ring protein, found in Bordetella bronchiseptica (strain ATCC BAA-588 / NCTC 13252 / RB50) (Alcaligenes bronchisepticus).